A 550-amino-acid chain; its full sequence is Membrane protein insertase YidC (550 aa).

A helical membrane pass occupies residues 3 to 23 (IKRTVLWVIFFMSAVMLFDNW). Residues 34-73 (FPSATQTKTAAPAAPGSSTTASQPTDLPQTTAAAPGSTTP) are disordered. Residues 35-73 (PSATQTKTAAPAAPGSSTTASQPTDLPQTTAAAPGSTTP) show a composition bias toward low complexity. A run of 4 helical transmembrane segments spans residues 363 to 383 (WGWAIVLLTLLIKAVFFPLSA), 429 to 449 (FGGCLPVVIQIPVFISLYWVL), 472 to 492 (PYFILPVLMAVSMFVQTKLNP), and 503 to 523 (MMFMPIAFSVMFFFFPAGLVL).

This sequence belongs to the OXA1/ALB3/YidC family. Type 1 subfamily. In terms of assembly, interacts with the Sec translocase complex via SecD. Specifically interacts with transmembrane segments of nascent integral membrane proteins during membrane integration.

It is found in the cell inner membrane. In terms of biological role, required for the insertion and/or proper folding and/or complex formation of integral membrane proteins into the membrane. Involved in integration of membrane proteins that insert both dependently and independently of the Sec translocase complex, as well as at least some lipoproteins. Aids folding of multispanning membrane proteins. In Paraburkholderia phymatum (strain DSM 17167 / CIP 108236 / LMG 21445 / STM815) (Burkholderia phymatum), this protein is Membrane protein insertase YidC.